Consider the following 214-residue polypeptide: GTP-binding protein ypt3 (214 aa).

17-24 (GDSGVGKS) serves as a coordination point for GTP. The short motif at 39 to 47 (SKSTIGVEF) is the Effector region element. Threonine 42 is modified (phosphothreonine). GTP-binding positions include 65–69 (DTAGQ) and 123–126 (NKTD). Residues cysteine 213 and cysteine 214 are each lipidated (S-geranylgeranyl cysteine).

This sequence belongs to the small GTPase superfamily. Rab family.

It is found in the cell membrane. Its subcellular location is the endosome membrane. The protein resides in the golgi apparatus membrane. It localises to the cytoplasm. The protein localises to the nucleus. In terms of biological role, has a role in retrograde traffricking of proteins from the endosome to the Golgi. Involved in the secretory pathway where it has a role in acid phosphatase secretion. The sequence is that of GTP-binding protein ypt3 (ypt3) from Schizosaccharomyces pombe (strain 972 / ATCC 24843) (Fission yeast).